A 670-amino-acid chain; its full sequence is DNA ligase (670 aa).

NAD(+) is bound by residues 33–37, 82–83, and Glu-114; these read DAEYD and SL. Lys-116 functions as the N6-AMP-lysine intermediate in the catalytic mechanism. Residues Arg-137, Glu-173, Lys-291, and Lys-315 each contribute to the NAD(+) site. Positions 409, 412, 427, and 433 each coordinate Zn(2+). The BRCT domain occupies 592 to 670; the sequence is VQSDRLSGNT…ENALAELLSD (79 aa).

Belongs to the NAD-dependent DNA ligase family. LigA subfamily. The cofactor is Mg(2+). Requires Mn(2+) as cofactor.

The catalysed reaction is NAD(+) + (deoxyribonucleotide)n-3'-hydroxyl + 5'-phospho-(deoxyribonucleotide)m = (deoxyribonucleotide)n+m + AMP + beta-nicotinamide D-nucleotide.. Functionally, DNA ligase that catalyzes the formation of phosphodiester linkages between 5'-phosphoryl and 3'-hydroxyl groups in double-stranded DNA using NAD as a coenzyme and as the energy source for the reaction. It is essential for DNA replication and repair of damaged DNA. The polypeptide is DNA ligase (Idiomarina loihiensis (strain ATCC BAA-735 / DSM 15497 / L2-TR)).